A 161-amino-acid polypeptide reads, in one-letter code: Tick receptor for ospA (161 aa).

Interacts with ospA protein from B.burgdorferi. Glycosylated. Specifically expressed in gut. Localizes predominantly in the intercellular spaces and luminal surface of the gut. In the gut, it localizes along tight junctions. Not expressed in salivary gland or hemolymph.

The protein resides in the cell membrane. Its function is as follows. Serves as a receptor for ospA protein of B.burgdorferi, the Lyme disease agent. Required for spirochetal colonization. Essential for pathogen adherence to the vector. This Ixodes scapularis (Black-legged tick) protein is Tick receptor for ospA (TROSPA).